We begin with the raw amino-acid sequence, 7079 residues long: Replicase polyprotein 1ab (7079 aa).

Residues 12–127 (THVQLSLPVL…YRNVLLRKNG (116 aa)) form the CoV Nsp1 globular domain. One can recognise a BetaCoV Nsp1 C-terminal domain in the interval 148–179 (ELGTDPIEDYEQNWNTKHGGGVLRELIRELNG). Positions 183-456 (TRYVDNNFCG…NEDLMEILNR (274 aa)) constitute a CoV Nsp2 N-terminal domain. Zn(2+) is bound by residues C200, C231, H234, H236, C323, C326, C341, C344, C370, C373, H382, and C416. The tract at residues 200–236 (CIKDLLARAGKSMCTLSEQLDYIESKRGVYCCREHEH) is C2H2. The tract at residues 323–344 (CNHCDEVSWQTCDFLKATCEQC) is C4. Residues 370–416 (CPACQDPEVGPEHSVADYHNHSNIETRLRKGGRTKCFGGCVFAYVGC) form a C2HC region. The CoV Nsp2 middle domain maps to 458-688 (RVNINIVGDF…LDVLNKALEM (231 aa)). Residues 690-818 (IDQVIIAGAK…TNNVFSLKGG (129 aa)) form the CoV Nsp2 C-terminal domain. Positions 822–930 (KGVTFGEDTV…MYCSFYPPDE (109 aa)) constitute a Ubiquitin-like 1 domain. Macro domains lie at 1001–1167 (VNQF…LGYL), 1213–1341 (KFKA…LPSK), and 1349–1476 (ILGT…TSSS). Residues 1478 to 1544 (TSEEHFIETV…LLDKLKSLLS (67 aa)) enclose the DPUP domain. One can recognise a Ubiquitin-like 2 domain in the interval 1548 to 1603 (VRTIKVFTTVDNTNLHTQIVDMSMTYGQQFGPTYLDGADVTKIKPHAKHEGKTFFV). The 265-residue stretch at 1617–1881 (YYHTLDESFL…YTEIQPKLDE (265 aa)) folds into the Peptidase C16 domain. C1657 functions as the For PL-PRO activity in the catalytic mechanism. The Zn(2+) site is built by C1735, C1738, C1770, and C1772. The C4-type zinc finger occupies 1735–1772 (CKTCGQKSTTLTGVEAVMYMGTLSYEELKTGVTIPCIC). Active-site for PL-PRO activity residues include H1818 and D1832. Residues 1894 to 2004 (PIDLVPTQPL…CLWSTKPVET (111 aa)) form the Nucleic acid-binding domain. Positions 2029–2138 (PTSEEVVENP…LGQAAVTTTN (110 aa)) constitute a G2M domain. The segment at 2098–2377 (LALGLRTLAT…IFFAFCYYVW (280 aa)) is HD1. A helical membrane pass occupies residues 2209 to 2229 (LFTIAMWLLLLSICLGSLIYV). Residues 2230–2300 (TAAFGVLLSN…QVTISSYKLD (71 aa)) form the 3Ecto domain. 2 disulfide bridges follow: C2246/C2274 and C2265/C2271. 2 consecutive transmembrane segments (helical) span residues 2310-2330 (WFLAYMLFTKFFYLLGLSAIM) and 2357-2377 (MAPVSAMVRMYIFFAFCYYVW). The segment at 2378–2468 (KSYVHIMDGC…QFKRPINPTD (91 aa)) is Y1. Residues 2378–2746 (KSYVHIMDGC…ITTKISLKGG (369 aa)) enclose the CoV Nsp3 Y domain. Zn(2+)-binding residues include H2382, C2387, C2392, C2395, C2428, H2431, C2435, and C2438. The tract at residues 2382–2395 (HIMDGCTSSTCMMC) is ZF1. The segment at 2428-2438 (CKAHNWNCLNC) is ZF2. The interval 2469-2563 (QSSYVVDSVA…LLDQALVSDV (95 aa)) is Y2. Residues 2469-2746 (QSSYVVDSVA…ITTKISLKGG (278 aa)) form a coV-Y region. The tract at residues 2564 to 2645 (GDSTEVSVKM…ECLKLSHHSD (82 aa)) is Y3. The tract at residues 2646-2746 (LEVTGDSCNN…ITTKISLKGG (101 aa)) is Y4. 7 consecutive transmembrane segments (helical) span residues 2761 to 2781 (LLCVLAALFCYIIMPVHSLSV), 2998 to 3018 (PGVFCGVDAMNLIANIFTPLV), 3028 to 3048 (ASVVAGGIIAILVTCAAYYFM), 3060 to 3080 (VVAANALLFLMSFTILCLAPA), 3083 to 3103 (FLPGVYSIFYLYLTFYFTNDV), 3111 to 3131 (WFAMFSPIVPFWITAIYVFCI), and 3148 to 3168 (VMFNGVTFSTFEEAALCTFLL). The tract at residues 2761 to 3168 (LLCVLAALFC…EEAALCTFLL (408 aa)) is HD2. The Nsp4C domain maps to 3148–3246 (VMFNGVTFST…QTSITSAVLQ (99 aa)). The region spanning 3247 to 3552 (SGFRKMAFPS…VRQCSGVTFQ (306 aa)) is the Peptidase C30 domain. Active-site for 3CL-PRO activity residues include H3287 and C3391. 7 consecutive transmembrane segments (helical) span residues 3570-3590 (FLTSLLILVQSTQWSLFFFVY), 3592-3612 (NAFLPFTLGIMAIAACAMLLV), 3618-3638 (FLCLFLLPSLATVAYFNMVYM), 3665-3684 (CVMYASALVLLVLMTARTVY), 3691-3710 (VWTLMNVITLVYKVYYGNSL), 3734-3754 (IMFLARAIVFVCVEYYPLLFI), and 3762-3782 (IMLVYCFLGYCCCCYFGLFCL). The HD3 stretch occupies residues 3570 to 3782 (FLTSLLILVQ…CCCYFGLFCL (213 aa)). Residues 3843-3925 (SKMSDVKCTS…EMLDNRATLQ (83 aa)) form the RdRp Nsp7 cofactor domain. A RdRp Nsp8 cofactor domain is found at 3926–4123 (AIASEFSSLP…LRANSAVKLQ (198 aa)). The Nsp9 ssRNA-binding domain maps to 4124–4236 (NNELSPVALR…GSLAATVRLQ (113 aa)). Residues 4237 to 4375 (AGNATEVPAN…CDQLREPMMQ (139 aa)) form the ExoN/MTase coactivator domain. Zn(2+)-binding residues include C4310, C4313, H4319, C4326, C4353, C4356, C4364, and C4366. Zinc fingers lie at residues 4310–4326 (CLYCRCHIDHPNPKGFC) and 4353–4366 (CTVCGTWKGYGCSC). Positions 4382-4636 (FLNRVCGVSA…AAESHMDADL (255 aa)) constitute a NiRAN domain. The Mn(2+) site is built by N4584 and D4593. Residues 4641–4739 (IKWDLLKYDF…HNQDVNLHSS (99 aa)) form the Nsp12 Interface domain. Residues H4670, C4676, C4681, C4685, and C4862 each coordinate Zn(2+). The 568-residue stretch at 4740–5307 (RLSFKELLVY…AMYTPHTVLQ (568 aa)) folds into the Nsp12 RNA-dependent RNA polymerase domain. The rdRp Fingers N-ter stretch occupies residues 4742 to 4956 (SFKELLVYAA…HQKLLKSIAA (215 aa)). The tract at residues 4957–4995 (TRGATVVIGTSKFYGGWHNMLKTVYSDVETPHLMGWDYP) is rdRp Palm N-ter. Positions 4987–5149 (PHLMGWDYPK…CYNSNYAAQG (163 aa)) constitute a RdRp catalytic domain. Residues 4996 to 5054 (KCDRAMPNMLRIMASLVLARKHSTCCNLSHRFYRLANECAQVLSEMVMCGGSLYVKPGG) are rdRp Fingers C-ter. Zn(2+)-binding residues include H5017, C5020, and C5021. The rdRp Palm C-ter stretch occupies residues 5055-5190 (TSSGDATTAY…TKGPHEFCSQ (136 aa)). Active-site residues include S5134, D5135, and D5136. The interval 5191–5307 (HTMLVKQGDD…AMYTPHTVLQ (117 aa)) is rdRp Thumb. Positions 5308–5420 (AVGACVLCNS…TDFNAIATCD (113 aa)) constitute a CV ZBD domain. C5312, C5315, C5323, C5326, C5333, C5336, H5340, H5346, C5357, C5362, C5379, and H5382 together coordinate Zn(2+). Positions 5564 to 5745 (NISDEFSSNV…MKTIGPDMFL (182 aa)) constitute a (+)RNA virus helicase ATP-binding domain. Residue 5589–5596 (GPPGTGKS) participates in ATP binding. One can recognise a (+)RNA virus helicase C-terminal domain in the interval 5746–5915 (GTCRRCPAEI…TLQAENVTGL (170 aa)). The ExoN domain maps to 5980 to 6195 (MFITREEAIR…RCLAVHECFV (216 aa)). Residues D5998, E6000, and E6099 contribute to the active site. Residues C6115, C6118, C6134, H6137, H6165, C6169, and H6172 each coordinate Zn(2+). Catalysis depends on residues H6176 and D6181. Zn(2+) is bound at residue C6187. The N7-MTase domain occupies 6204 to 6435 (YPIIGDELKI…NLWNTFTRLQ (232 aa)). 6239–6245 (DIGNPKA) provides a ligand contact to S-adenosyl-L-methionine. A gpppA-binding region spans residues 6322-6336 (CDGGSLYVNKHAFHT). The Zn(2+) site is built by C6360, C6381, C6392, and H6395. Residues 6436–6496 (SLENVAYNVV…NVAFELWAKR (61 aa)) enclose the Nsp15 N-terminal oligomerization domain. The AV-Nsp11N/CoV-Nsp15M domain occupies 6497 to 6622 (NIKPVPEIKI…YFKKVDGIIQ (126 aa)). The region spanning 6639 to 6778 (KPRSKMETDF…KDGHVETFYP (140 aa)) is the NendoU domain. Residues H6669, H6684, K6724, K6827, D6911, K6951, and E6984 contribute to the active site. Residues 6783–7077 (SQAWQPGVAM…RVVVSSDILV (295 aa)) enclose the Nidovirus-type SAM-dependent 2'-O-MTase domain.

This sequence belongs to the coronaviruses polyprotein 1ab family. In terms of assembly, interacts with host PHB and PHB2. Interacts with papain-like protease nsp3 and non-structural protein 6. As to quaternary structure, monomer. Homodimer. Only the homodimer shows catalytic activity. In terms of assembly, interacts with nsp8 and nsp12 to form the replication-transcription complex (RTC): nsp12, nsp7, two subunits of nsp8, and up to two subunits of nsp13. Interacts with nsp7, nsp13 and nsp12 to form the replication-transcription complex (RTC): nsp12, nsp7, two subunits of nsp8, and up to two subunits of nsp13. As to quaternary structure, interacts with nsp12. In terms of assembly, interacts with proofreading exoribonuclease nsp14 and 2'-O-methyltransferase nsp16; these interactions enhance nsp14 and nsp16 enzymatic activities. Interacts with nsp7 and nsp8 to form the replication-transcription complex (RTC): nsp12, nsp7, two subunits of nsp8, and up to two subunits of nsp13. Interacts with nsp9. As to quaternary structure, interacts with nsp8 to form the replication-transcription complex (RTC): nsp12, nsp7, two subunits of nsp8, and up to two subunits of nsp13. It depends on Mn(2+) as a cofactor. Mg(2+) is required as a cofactor. Specific enzymatic cleavages in vivo by its own proteases yield mature proteins. 3CL-PRO and PL-PRO proteinases are autocatalytically processed.

The protein resides in the host membrane. Its subcellular location is the host cytoplasm. It localises to the host perinuclear region. It is found in the host endoplasmic reticulum-Golgi intermediate compartment. The enzyme catalyses RNA(n) + a ribonucleoside 5'-triphosphate = RNA(n+1) + diphosphate. It carries out the reaction ATP + H2O = ADP + phosphate + H(+). The catalysed reaction is Thiol-dependent hydrolysis of ester, thioester, amide, peptide and isopeptide bonds formed by the C-terminal Gly of ubiquitin (a 76-residue protein attached to proteins as an intracellular targeting signal).. It catalyses the reaction a 5'-end (N(7)-methyl 5'-triphosphoguanosine)-ribonucleoside in mRNA + S-adenosyl-L-methionine = a 5'-end (N(7)-methyl 5'-triphosphoguanosine)-(2'-O-methyl-ribonucleoside) in mRNA + S-adenosyl-L-homocysteine + H(+). The enzyme catalyses uridylyl-uridylyl-ribonucleotide-RNA = a 3'-end uridylyl-2',3'-cyclophospho-uridine-RNA + a 5'-end dephospho-ribonucleoside-RNA. It carries out the reaction a 5'-end diphospho-ribonucleoside in mRNA + GTP + H(+) = a 5'-end (5'-triphosphoguanosine)-ribonucleoside in mRNA + diphosphate. The catalysed reaction is a 5'-end (5'-triphosphoguanosine)-ribonucleoside in mRNA + S-adenosyl-L-methionine = a 5'-end (N(7)-methyl 5'-triphosphoguanosine)-ribonucleoside in mRNA + S-adenosyl-L-homocysteine. Its function is as follows. The replicase polyprotein of coronaviruses is a multifunctional protein: it contains the activities necessary for the transcription of negative stranded RNA, leader RNA, subgenomic mRNAs and progeny virion RNA as well as proteinases responsible for the cleavage of the polyprotein into functional products. In terms of biological role, inhibits host translation by interacting with the 40S ribosomal subunit. The nsp1-40S ribosome complex further induces an endonucleolytic cleavage near the 5'UTR of host mRNAs, targeting them for degradation. Viral mRNAs are not susceptible to nsp1-mediated endonucleolytic RNA cleavage thanks to the presence of a 5'-end leader sequence and are therefore protected from degradation. By suppressing host gene expression, nsp1 facilitates efficient viral gene expression in infected cells and evasion from host immune response. May play a role in the modulation of host cell survival signaling pathway by interacting with host PHB and PHB2. Indeed, these two proteins play a role in maintaining the functional integrity of the mitochondria and protecting cells from various stresses. Functionally, responsible for the cleavages located at the N-terminus of the replicase polyprotein. In addition, PL-PRO possesses a deubiquitinating/deISGylating activity and processes both 'Lys-48'- and 'Lys-63'-linked polyubiquitin chains from cellular substrates. Participates together with nsp4 in the assembly of virally-induced cytoplasmic double-membrane vesicles necessary for viral replication. Antagonizes innate immune induction of type I interferon by blocking the phosphorylation, dimerization and subsequent nuclear translocation of host IRF3. Also prevents host NF-kappa-B signaling. Its function is as follows. Participates in the assembly of virally-induced cytoplasmic double-membrane vesicles necessary for viral replication. In terms of biological role, cleaves the C-terminus of replicase polyprotein at 11 sites. Recognizes substrates containing the core sequence [ILMVF]-Q-|-[SGACN]. Also able to bind an ADP-ribose-1''-phosphate (ADRP). Plays a role in the initial induction of autophagosomes from host endoplasmic reticulum. Later, limits the expansion of these phagosomes that are no longer able to deliver viral components to lysosomes. Functionally, forms a hexadecamer with nsp8 (8 subunits of each) that may participate in viral replication by acting as a primase. Alternatively, may synthesize substantially longer products than oligonucleotide primers. Its function is as follows. Forms a hexadecamer with nsp7 (8 subunits of each) that may participate in viral replication by acting as a primase. Alternatively, may synthesize substantially longer products than oligonucleotide primers. In terms of biological role, forms a primer, NSP9-pU, which is utilized by the polymerase for the initiation of RNA chains. Interacts with ribosome signal recognition particle RNA (SRP). Together with NSP8, suppress protein integration into the cell membrane, thereby disrupting host immune defenses. Plays a pivotal role in viral transcription by stimulating both nsp14 3'-5' exoribonuclease and nsp16 2'-O-methyltransferase activities. Therefore plays an essential role in viral mRNAs cap methylation. Functionally, RNA-directed RNA polymerase that catalyzes the transcription of viral genomic and subgenomic RNAs. Acts in complex with nsp7 and nsp8 to transcribe both the minus and positive strands of genomic RNA. The kinase-like NiRAN domain of NSP12 attaches one or more nucleotides to the amino terminus of NSP9, forming a covalent RNA-protein intermediate that serves as transcription/replication primer. Subgenomic RNAs (sgRNAs) are formed by discontinuous transcription: The polymerase has the ability to pause at transcription-regulating sequences (TRS) and jump to the leader TRS, resulting in a major deletion. This creates a series of subgenomic RNAs that are replicated, transcribed and translated. In addition, Nsp12 is a subunit of the viral RNA capping enzyme that catalyzes the RNA guanylyltransferase reaction for genomic and sub-genomic RNAs. Subsequently, the NiRAN domain transfers RNA to GDP, and forms the core cap structure GpppA-RNA. Its function is as follows. Multi-functional protein with a zinc-binding domain in N-terminus displaying RNA and DNA duplex-unwinding activities with 5' to 3' polarity. Activity of helicase is dependent on magnesium. In terms of biological role, plays a role in viral RNA synthesis through two distinct activities. The N7-guanine methyltransferase activity plays a role in the formation of the cap structure GpppA-RNA. The proofreading exoribonuclease reduces the sensitivity of the virus to RNA mutagens during replication. This activity acts on both ssRNA and dsRNA in a 3'-5' direction. Plays a role in viral transcription/replication and prevents the simultaneous activation of host cell dsRNA sensors, such as MDA5/IFIH1, OAS, and PKR. Acts by degrading the 5'-polyuridines generated during replication of the poly(A) region of viral genomic and subgenomic RNAs. Catalyzes a two-step reaction in which a 2'3'-cyclic phosphate (2'3'-cP) is first generated by 2'-O transesterification, which is then hydrolyzed to a 3'-phosphate (3'-P). If not degraded, poly(U) RNA would hybridize with poly(A) RNA tails and activate host dsRNA sensors. Functionally, methyltransferase that mediates mRNA cap 2'-O-ribose methylation to the 5'-cap structure of viral mRNAs. N7-methyl guanosine cap is a prerequisite for binding of nsp16. Therefore plays an essential role in viral mRNAs cap methylation which is essential to evade immune system. The sequence is that of Replicase polyprotein 1ab (rep) from Bat coronavirus 279/2005 (BtCoV).